The chain runs to 163 residues: Cyanate hydratase (163 aa).

Active-site residues include R103, E106, and S129.

Belongs to the cyanase family.

The enzyme catalyses cyanate + hydrogencarbonate + 3 H(+) = NH4(+) + 2 CO2. Catalyzes the reaction of cyanate with bicarbonate to produce ammonia and carbon dioxide. The protein is Cyanate hydratase of Talaromyces marneffei (strain ATCC 18224 / CBS 334.59 / QM 7333) (Penicillium marneffei).